Reading from the N-terminus, the 347-residue chain is Isocitrate dehydrogenase [NAD] subunit alpha, mitochondrial (347 aa).

The transit peptide at 1-8 (QKQVTRGF) directs the protein to the mitochondrion. 14 to 42 (TVTLIPGDGIGPEISAAVMKIFDAAKAPI) is a binding site for NAD(+). Lysine 58 carries the N6-succinyllysine modification. Residue threonine 82 is modified to Phosphothreonine. Substrate is bound by residues arginine 96, arginine 106, and arginine 127. At lysine 204 the chain carries N6-acetyllysine. Residues aspartate 214, aspartate 238, and aspartate 242 each coordinate Mg(2+). N6-acetyllysine; alternate is present on lysine 324. At lysine 324 the chain carries N6-succinyllysine; alternate. Lysine 331 bears the N6-succinyllysine mark.

Belongs to the isocitrate and isopropylmalate dehydrogenases family. As to quaternary structure, heterooligomer of subunits alpha (IDH3A), beta (IDH3B), and gamma (IDH3G) in the apparent ratio of 2:1:1. The heterodimer containing one IDH3A and one IDH3B subunit and the heterodimer containing one IDH3A and one IDH3G subunit assemble into a heterotetramer (which contains two subunits of IDH3A, one of IDH3B and one of IDH3G) and further into the heterooctamer. Mg(2+) serves as cofactor. Mn(2+) is required as a cofactor.

The protein resides in the mitochondrion. The enzyme catalyses D-threo-isocitrate + NAD(+) = 2-oxoglutarate + CO2 + NADH. Its activity is regulated as follows. The heterotetramer and the heterodimer composed of IDH3A and IDH3G subunits can be allosterically activated by citrate (CIT) or/and ADP, and the two activators can act independently or synergistically. The heterodimer composed of IDH3A and IDH3B subunits cannot be allosterically regulated and the allosteric regulation of the heterotetramer is through the IDH3G subunit and not the IDH3B subunit. The IDH3G subunit contains the allosteric site which consists of a CIT-binding site and an ADP-binding site, and the binding of CIT and ADP causes conformational changes at the allosteric site which are transmitted to the active site in the catalytic subunit (IDH3A) through a cascade of conformational changes at the heterodimer interface, leading to stabilization of the isocitrate-binding at the active site and thus activation of the enzyme. ATP can activate the heterotetramer and the heterodimer composed of IDH3A and IDH3G subunits at low concentrations but inhibits their activities at high concentrations, whereas ATP exhibits only inhibitory effect on the heterodimer composed of IDH3A and IDH3B subunits. Catalytic subunit of the enzyme which catalyzes the decarboxylation of isocitrate (ICT) into alpha-ketoglutarate. The heterodimer composed of the alpha (IDH3A) and beta (IDH3B) subunits and the heterodimer composed of the alpha (IDH3A) and gamma (IDH3G) subunits, have considerable basal activity but the full activity of the heterotetramer (containing two subunits of IDH3A, one of IDH3B and one of IDH3G) requires the assembly and cooperative function of both heterodimers. The protein is Isocitrate dehydrogenase [NAD] subunit alpha, mitochondrial (IDH3A) of Macaca fascicularis (Crab-eating macaque).